The primary structure comprises 1026 residues: Multidrug resistance protein MdtC (1026 aa).

Over M1 to L6 the chain is Cytoplasmic. A helical membrane pass occupies residues F7 to F29. Over R30–E335 the chain is Periplasmic. The chain crosses the membrane as a helical span at residues E336–L353. Residues R354 to T359 lie on the Cytoplasmic side of the membrane. Residues L360–L379 traverse the membrane as a helical segment. Topologically, residues C380–S388 are periplasmic. The helical transmembrane segment at L389–A411 threads the bilayer. Over R412–E430 the chain is Cytoplasmic. The chain crosses the membrane as a helical span at residues V431–G453. At G454–L467 the chain is on the periplasmic side. Residues S468–L490 form a helical membrane-spanning segment. The Cytoplasmic segment spans residues K491–Q852. A helical membrane pass occupies residues L853–V875. Residues H876 to A894 are Periplasmic-facing. A helical transmembrane segment spans residues L895–V917. Over K918–C947 the chain is Cytoplasmic. The chain crosses the membrane as a helical span at residues L948–L970. The Periplasmic segment spans residues S971–I984. A helical membrane pass occupies residues T985–F1007. Residues F1008–I1026 lie on the Cytoplasmic side of the membrane.

It belongs to the resistance-nodulation-cell division (RND) (TC 2.A.6) family. MdtC subfamily. As to quaternary structure, part of a tripartite efflux system composed of MdtA, MdtB and MdtC. MdtC forms a heteromultimer with MdtB.

Its subcellular location is the cell inner membrane. This is Multidrug resistance protein MdtC from Salmonella typhimurium (strain LT2 / SGSC1412 / ATCC 700720).